A 448-amino-acid polypeptide reads, in one-letter code: Cytoplasmic tRNA 2-thiolation protein 2 (448 aa).

Belongs to the CTU2/NCS2 family.

It is found in the cytoplasm. It functions in the pathway tRNA modification; 5-methoxycarbonylmethyl-2-thiouridine-tRNA biosynthesis. Plays a central role in 2-thiolation of mcm(5)S(2)U at tRNA wobble positions of tRNA(Lys), tRNA(Glu) and tRNA(Gln). May act by forming a heterodimer with NCS6 that ligates sulfur from thiocarboxylated URM1 onto the uridine of tRNAs at wobble position. Prior mcm(5) tRNA modification by the elongator complex is required for 2-thiolation. May also be involved in protein urmylation. In Scheffersomyces stipitis (strain ATCC 58785 / CBS 6054 / NBRC 10063 / NRRL Y-11545) (Yeast), this protein is Cytoplasmic tRNA 2-thiolation protein 2.